Consider the following 794-residue polypeptide: Cadherin-12 (794 aa).

Positions 1–23 are cleaved as a signal peptide; the sequence is MLTRNCLSLLLWVLFDGGLLTPL. Residues 24 to 54 constitute a propeptide that is removed on maturation; the sequence is QPQPQQTLATEPRENVIHLPGQRSHFQRVKR. Cadherin domains lie at 55-160, 161-269, 270-384, 385-487, and 488-609; these read GWVW…EPKF, LDGP…PPRF, PKSI…PPVF, SKPL…EFPP, and EISV…IFLP. Over 55 to 609 the chain is Extracellular; sequence GWVWNQFFVL…SCNVEAIFLP (555 aa). An N-linked (GlcNAc...) asparagine glycan is attached at asparagine 256. N-linked (GlcNAc...) asparagine glycans are attached at residues asparagine 456, asparagine 537, and asparagine 545. A helical transmembrane segment spans residues 610 to 637; the sequence is VGLSTGALIAILLCIVILLAIVVLYVAL. Topologically, residues 638 to 794 are cytoplasmic; that stretch reads RRQKKKDTLM…EESYNPDKVT (157 aa). Position 787 is a phosphoserine (serine 787).

In terms of tissue distribution, brain.

It is found in the cell membrane. Cadherins are calcium-dependent cell adhesion proteins. They preferentially interact with themselves in a homophilic manner in connecting cells; cadherins may thus contribute to the sorting of heterogeneous cell types. The polypeptide is Cadherin-12 (CDH12) (Homo sapiens (Human)).